The primary structure comprises 494 residues: Nuclear distribution protein PAC1 (494 aa).

In terms of domain architecture, LisH spans Gln-14–Arg-46. Positions Asn-90–Leu-123 form a coiled coil. WD repeat units lie at residues Asn-153–Ala-192, Ser-196–Gln-244, Gly-251–Thr-292, Pro-295–Thr-334, His-347–His-395, Gly-415–Glu-454, and His-457–Phe-492.

It belongs to the WD repeat LIS1/nudF family. Self-associates. Interacts with NDL1 and dynein.

It localises to the cytoplasm. It is found in the cytoskeleton. The protein resides in the spindle pole. Its function is as follows. Positively regulates the activity of the minus-end directed microtubule motor protein dynein. Plays a central role in positioning the mitotic spindle at the bud neck during cell division. Targets cytoplasmic dynein to microtubule plus ends, thereby promoting dynein-mediated microtubule sliding along the bud cortex and consequently the movement of the mitotic spindle to the bud neck. This is Nuclear distribution protein PAC1 from Saccharomyces cerevisiae (strain YJM789) (Baker's yeast).